The chain runs to 433 residues: MAQEIELKFIVNHSAVEALRDHLNTLGGEHHDPVQLLNIYYETPDNWLRGHDMGLRIRGENGRYEMTMKVAGRVTGGLHQRPEYNVALSEPTLDLAQLPTEVWPNGELPADLASRVQPLFSTDFYREKWLVAVDGSQIEIALDQGEVKAGEFAEPICELELELLSGDTRAVLKLANQLVSQTGLRQGSLSKAARGYHLAQGNPAREIKPTTILHVAAKADVEQGLEAALELALAQWQYHEELWVRGNDAAKEQVLAAISLVRHTLMLFGGIVPRKASTHLRDLLTQCEATIASAVSAVTAVYSTETAMAKLALTEWLVSKAWQPFLDAKAQGKISDSFKRFADIHLSRHAAELKSVFCQPLGDRYRDQLPRLTRDIDSILLLAGYYDPVVAQAWLENWQGLHHAIATGQRIEIEHFRNEANNQEPFWLHSGKR.

In terms of domain architecture, CYTH spans 2 to 202; it reads AQEIELKFIV…ARGYHLAQGN (201 aa). One can recognise a CHAD domain in the interval 218–433; it reads KADVEQGLEA…EPFWLHSGKR (216 aa).

It carries out the reaction triphosphate + H2O = phosphate + diphosphate. Its activity is regulated as follows. Inhibited by calcium ion and activated by magnesium ion. Involved in the hydrolysis of the beta-gamma-phosphoanhydride linkage of triphosphate-containing substrates (inorganic or nucleoside-linked). Catalyzes the hydrolysis of inorganic triphosphate (PPPi), which could be cytotoxic because of its high affinity for calcium ion, thereby interfering with calcium signaling. It also hydrolyzes slowly thiamine triphosphate (ThTP). YgiF is a specific PPPase, but it contributes only marginally to the total PPPase activity in E.coli, where the main enzyme responsible for hydrolysis of PPPi is inorganic pyrophosphatase (PPase). The polypeptide is Inorganic triphosphatase (ygiF) (Escherichia coli (strain K12)).